We begin with the raw amino-acid sequence, 136 residues long: Peptide methionine sulfoxide reductase MsrB (136 aa).

Positions 9 to 136 constitute a MsrB domain; it reads DAEWKALLAE…NSASLDFKPK (128 aa). Cysteine 53, cysteine 56, cysteine 102, and cysteine 105 together coordinate Zn(2+). Residue cysteine 125 is the Nucleophile of the active site.

This sequence belongs to the MsrB Met sulfoxide reductase family. The cofactor is Zn(2+).

It catalyses the reaction L-methionyl-[protein] + [thioredoxin]-disulfide + H2O = L-methionyl-(R)-S-oxide-[protein] + [thioredoxin]-dithiol. The polypeptide is Peptide methionine sulfoxide reductase MsrB (Polaromonas sp. (strain JS666 / ATCC BAA-500)).